A 226-amino-acid polypeptide reads, in one-letter code: ATP synthase F(0) complex subunit a (226 aa).

Helical transmembrane passes span 6-26, 68-88, 97-117, 138-158, 164-184, and 193-213; these read FAPFITPTVLGISVLPLIMIF, WTLMLITLIIFIASTNLLGLL, QLSMNMGMAIPLWMGTVLMGF, IPMLIIIETISLFIQPLALAV, ITAGHLLIHLIGSATLALSSI, and FTILFLLTILEFAVALIQAYV.

This sequence belongs to the ATPase A chain family. Component of the ATP synthase complex composed at least of ATP5F1A/subunit alpha, ATP5F1B/subunit beta, ATP5MC1/subunit c (homooctomer), MT-ATP6/subunit a, MT-ATP8/subunit 8, ATP5ME/subunit e, ATP5MF/subunit f, ATP5MG/subunit g, ATP5MK/subunit k, ATP5MJ/subunit j, ATP5F1C/subunit gamma, ATP5F1D/subunit delta, ATP5F1E/subunit epsilon, ATP5PF/subunit F6, ATP5PB/subunit b, ATP5PD/subunit d, ATP5PO/subunit OSCP. ATP synthase complex consists of a soluble F(1) head domain (subunits alpha(3) and beta(3)) - the catalytic core - and a membrane F(0) domain - the membrane proton channel (subunits c, a, 8, e, f, g, k and j). These two domains are linked by a central stalk (subunits gamma, delta, and epsilon) rotating inside the F1 region and a stationary peripheral stalk (subunits F6, b, d, and OSCP). Interacts with DNAJC30; interaction is direct.

It localises to the mitochondrion inner membrane. It catalyses the reaction H(+)(in) = H(+)(out). Subunit a, of the mitochondrial membrane ATP synthase complex (F(1)F(0) ATP synthase or Complex V) that produces ATP from ADP in the presence of a proton gradient across the membrane which is generated by electron transport complexes of the respiratory chain. ATP synthase complex consist of a soluble F(1) head domain - the catalytic core - and a membrane F(1) domain - the membrane proton channel. These two domains are linked by a central stalk rotating inside the F(1) region and a stationary peripheral stalk. During catalysis, ATP synthesis in the catalytic domain of F(1) is coupled via a rotary mechanism of the central stalk subunits to proton translocation. With the subunit c (ATP5MC1), forms the proton-conducting channel in the F(0) domain, that contains two crucial half-channels (inlet and outlet) that facilitate proton movement from the mitochondrial intermembrane space (IMS) into the matrix. Protons are taken up via the inlet half-channel and released through the outlet half-channel, following a Grotthuss mechanism. The protein is ATP synthase F(0) complex subunit a of Ornithorhynchus anatinus (Duckbill platypus).